The sequence spans 1035 residues: MGKVLILFLFVLLLITFINCTNNKILNNENSSNEDNVINVFLIPHSHCDLGWVQTLEEYYSENVTVILDNVINTLIKDSSKKFNWAEIYYFETWWNEQSSFLQAQVRNLVNNGQLYFVGGGWAQNDEGATHYQAVINQMTLGHQFLLSEFGVVPEIGWQIDPFGPSTLTATLFSLMGFKYHVINRIDERIKYIYNDTPDIVGSGWMTTDRSFEFQWYPSHNDQELSIFTHVLDHHYNSPYLIYPNASNPNQSLTTGFDFESDPTQNPPINQSNIYERAAVFVEIMQQRSQLYRHNNLLIPFGNDFRFQNASLEFDNMDKLITYINSNSSWGVTIQYATLNEYFEKVESIEPPVEYADIVGQDLFVYTMCLASDYQAFNTCANWWSGYYTSYPLLKQTARDSDSLLRVGEMLYSLSCFYSNGFDFDFNIGFYALSMHRNVSGILTHHDAITGTAKEYVRVNYFQMLNEAQSLTLDYNIPDFVGFLLSNKSLNIDYQSNGSSILNSTNPGDIIAISFTNSIAWDRIETVSIEIPFVNMAVYDYQLNPIQSQIVQRFDKSNNWYLYFQVATPALGISTYFIVILSTDGEILNDNSKNLPTPIQSILSISNELLFNDNDDETTTTTIGNSNFNLNFKFDRDNNNLLTLNSYDDLFNNKIGIPISQHLIEYTSLSDDAYKFRVQGLPIPLTPINPQFYLTIGPVVQIVTIIYNNNCSQSYLIYNDTTSFNPFETDNDNNNNSRLIKNDQYFEIDNIVASGWDKEISMKFTTNINNQNIFYTNNGLEIMKRQWEIHWNDTFIWSEITSNFYPMINTGYIVDQQVSDYQQQLTILSKQTFGASSQTNGEFEVLLIRRSNYTQWSVHEPMNDTSNPSLRVLCIFGDPNFSNEIRTPHSILFENPLQPVYSLIPNSIPIEKYIDTYNTLFKPLQTSLPYNLHLLTFTKQWIDSPSIIMRLINIYEIGQSINFSKSINFNIGSGDNNNNNNNNNNNGFLTHYNISQIIETTLSANSELSNPTNNLVITLEPLEIKTFLLTLSPKQ.

The signal sequence occupies residues 1 to 20 (MGKVLILFLFVLLLITFINC). N-linked (GlcNAc...) asparagine glycosylation is found at N19 and N30. Zn(2+) is bound by residues H47 and D49. Residue N63 is glycosylated (N-linked (GlcNAc...) asparagine). D161 is a Zn(2+) binding site. The active-site Nucleophile is the D161. N-linked (GlcNAc...) asparagine glycosylation is found at N245, N250, N270, N309, N327, and N438. H446 serves as a coordination point for Zn(2+). N-linked (GlcNAc...) asparagine glycans are attached at residues N487, N497, N503, N710, N719, N735, N792, N852, N863, N880, N962, and N993.

The protein belongs to the glycosyl hydrolase 38 family. It depends on Zn(2+) as a cofactor.

It is found in the secreted. It carries out the reaction Hydrolysis of terminal, non-reducing alpha-D-mannose residues in alpha-D-mannosides.. The polypeptide is Alpha-mannosidase B (manB) (Dictyostelium discoideum (Social amoeba)).